The following is a 335-amino-acid chain: RNA polymerase sigma factor RpoS (335 aa).

The tract at residues aspartate 57–alanine 90 is sigma-70 factor domain-1. A sigma-70 factor domain-2 region spans residues methionine 95–threonine 165. The short motif at aspartate 119–glutamate 122 is the Interaction with polymerase core subunit RpoC element. The sigma-70 factor domain-3 stretch occupies residues glutamate 175–serine 250. The tract at residues tryptophan 263–glutamate 316 is sigma-70 factor domain-4. The segment at residues leucine 289–valine 308 is a DNA-binding region (H-T-H motif).

The protein belongs to the sigma-70 factor family. RpoS subfamily. As to quaternary structure, interacts with the RNA polymerase core enzyme.

It is found in the cytoplasm. In terms of biological role, sigma factors are initiation factors that promote the attachment of RNA polymerase to specific initiation sites and are then released. This sigma factor is the master transcriptional regulator of the stationary phase and the general stress response. May be required for the persistence of V.cholerae in aquatic habitats. This chain is RNA polymerase sigma factor RpoS, found in Vibrio cholerae serotype O1 (strain ATCC 39315 / El Tor Inaba N16961).